The sequence spans 57 residues: Preprotein translocase subunit SecG (57 aa).

Over 1 to 33 the chain is Cytoplasmic; sequence MPSSKKKKENVPVMSMAGLIRYYEEEHEKYKVD. A helical membrane pass occupies residues 34–55; sequence PIYVIIASIVLVAVVVAVTKII. At 56 to 57 the chain is on the extracellular side; the sequence is PP.

Belongs to the SEC61-beta family. Component of the protein translocase complex. Heterotrimer consisting of alpha (SecY), beta (SecG) and gamma (SecE) subunits. Can form oligomers of the heterotrimer.

Its subcellular location is the cell membrane. Functionally, involved in protein export. The function of the beta subunit is unknown, but it may be involved in stabilization of the trimeric complex. In Metallosphaera sedula (strain ATCC 51363 / DSM 5348 / JCM 9185 / NBRC 15509 / TH2), this protein is Preprotein translocase subunit SecG.